The following is a 467-amino-acid chain: Probable tryptophanase (467 aa).

N6-(pyridoxal phosphate)lysine is present on K263.

This sequence belongs to the beta-eliminating lyase family. Pyridoxal 5'-phosphate serves as cofactor.

The catalysed reaction is L-tryptophan + H2O = indole + pyruvate + NH4(+). Its pathway is amino-acid degradation; L-tryptophan degradation via pyruvate pathway; indole and pyruvate from L-tryptophan: step 1/1. The sequence is that of Probable tryptophanase (tnaA) from Aeropyrum pernix (strain ATCC 700893 / DSM 11879 / JCM 9820 / NBRC 100138 / K1).